We begin with the raw amino-acid sequence, 151 residues long: MNEPVLFLLLLLALGFLAKNKSLIVAIVVLLAIKLVGLDQKVLPIIQSKGINWGVTVITIAVLAPIASGEIGFRQLVGSLQSLSAWVALASGIFVALIAKNGVTLLANDPHMTAALAFGTILAVSLFHGVAVGPLIGAGIAYTVIKMVEYF.

Transmembrane regions (helical) follow at residues 5–25 (VLFL…SLIV), 53–73 (WGVT…EIGF), 79–99 (SLQS…ALIA), and 121–141 (ILAV…AGIA).

Belongs to the UPF0756 family.

It localises to the cell membrane. The polypeptide is UPF0756 membrane protein GK2737 (Geobacillus kaustophilus (strain HTA426)).